The sequence spans 219 residues: 2-hydroxy-3-keto-5-methylthiopentenyl-1-phosphate phosphatase (219 aa).

This sequence belongs to the HAD-like hydrolase superfamily. MtnX family.

It catalyses the reaction 2-hydroxy-5-methylsulfanyl-3-oxopent-1-enyl phosphate + H2O = 1,2-dihydroxy-5-(methylsulfanyl)pent-1-en-3-one + phosphate. It participates in amino-acid biosynthesis; L-methionine biosynthesis via salvage pathway; L-methionine from S-methyl-5-thio-alpha-D-ribose 1-phosphate: step 4/6. Dephosphorylates 2-hydroxy-3-keto-5-methylthiopentenyl-1-phosphate (HK-MTPenyl-1-P) yielding 1,2-dihydroxy-3-keto-5-methylthiopentene (DHK-MTPene). This chain is 2-hydroxy-3-keto-5-methylthiopentenyl-1-phosphate phosphatase, found in Bacillus thuringiensis subsp. konkukian (strain 97-27).